We begin with the raw amino-acid sequence, 466 residues long: ATP synthase subunit beta (466 aa).

155-162 (GGAGVGKT) contacts ATP.

The protein belongs to the ATPase alpha/beta chains family. As to quaternary structure, F-type ATPases have 2 components, CF(1) - the catalytic core - and CF(0) - the membrane proton channel. CF(1) has five subunits: alpha(3), beta(3), gamma(1), delta(1), epsilon(1). CF(0) has three main subunits: a(1), b(2) and c(9-12). The alpha and beta chains form an alternating ring which encloses part of the gamma chain. CF(1) is attached to CF(0) by a central stalk formed by the gamma and epsilon chains, while a peripheral stalk is formed by the delta and b chains.

The protein resides in the cell inner membrane. The enzyme catalyses ATP + H2O + 4 H(+)(in) = ADP + phosphate + 5 H(+)(out). Its function is as follows. Produces ATP from ADP in the presence of a proton gradient across the membrane. The catalytic sites are hosted primarily by the beta subunits. The sequence is that of ATP synthase subunit beta from Bordetella avium (strain 197N).